Here is a 695-residue protein sequence, read N- to C-terminus: Highly divergent homeobox (695 aa).

2 DNA-binding regions (homeobox) span residues 3–63 (LRSV…SSKS) and 440–503 (ALQD…RLMG). A disordered region spans residues 56–81 (RRKMSSKSALESGGAPPGTAHTAPSV). Residues 653–695 (QQALLSDLPPELEEMDFNHTSPEPDDTSFSLSSLSEKNASDSL) form a disordered region. The segment covering 679 to 695 (TSFSLSSLSEKNASDSL) has biased composition (polar residues).

Its subcellular location is the nucleus. In Gallus gallus (Chicken), this protein is Highly divergent homeobox (HDX).